The sequence spans 639 residues: Complex I assembly factor Egm, mitochondrial (639 aa).

The N-terminal 26 residues, 1–26, are a transit peptide targeting the mitochondrion; it reads MRPNLFSGASRLLTYSRNGKLLTRGR. A disordered region spans residues 23 to 65; it reads TRGRSTKATSSSLDSQHQDAATTEGGRAESVEESPEQQRKLPT. The span at 28–43 shows a compositional bias: polar residues; that stretch reads TKATSSSLDSQHQDAA. Over residues 48–65 the composition is skewed to basic and acidic residues; that stretch reads GRAESVEESPEQQRKLPT.

This sequence belongs to the acyl-CoA dehydrogenase family. Associates with mitochondrial complex I assembly intermediates during its biogenesis. FAD serves as cofactor.

The protein localises to the mitochondrion. In terms of biological role, as part of the MCIA complex, primarily participates in the assembly of the mitochondrial complex I and therefore plays a role in oxidative phosphorylation. The polypeptide is Complex I assembly factor Egm, mitochondrial (Drosophila melanogaster (Fruit fly)).